Reading from the N-terminus, the 358-residue chain is E3 ubiquitin-protein ligase SIS3 (358 aa).

The first 27 residues, 1–27 (MAMRGVDFKWYDGFFLSMLATSVIIVA), serve as a signal peptide directing secretion. 3 helical membrane passes run 40 to 60 (LHIW…FMFV), 85 to 105 (VVVL…WTVI), and 125 to 145 (GFLI…FICV). The segment at 235 to 276 (CLICLEEFHIGHEVRGLPCAHNFHVECIDQWLRLNVKCPRCR) adopts an RING-type; atypical zinc-finger fold. Residues 336–358 (TALETAENGGVPPVLTDLSPSRR) form a disordered region.

In terms of tissue distribution, expressed in roots, stems, leaves, flowers and siliques.

The protein localises to the membrane. The enzyme catalyses S-ubiquitinyl-[E2 ubiquitin-conjugating enzyme]-L-cysteine + [acceptor protein]-L-lysine = [E2 ubiquitin-conjugating enzyme]-L-cysteine + N(6)-ubiquitinyl-[acceptor protein]-L-lysine.. It functions in the pathway protein modification; protein ubiquitination. E3 ubiquitin protein ligase that acts as a positive regulator of sugar signaling during early seedling development. Possesses E3 ligase activity in vitro. This chain is E3 ubiquitin-protein ligase SIS3 (SIS3), found in Arabidopsis thaliana (Mouse-ear cress).